Here is a 288-residue protein sequence, read N- to C-terminus: Glycine--tRNA ligase alpha subunit (288 aa).

This sequence belongs to the class-II aminoacyl-tRNA synthetase family. Tetramer of two alpha and two beta subunits.

The protein localises to the cytoplasm. The enzyme catalyses tRNA(Gly) + glycine + ATP = glycyl-tRNA(Gly) + AMP + diphosphate. The sequence is that of Glycine--tRNA ligase alpha subunit from Rickettsia africae (strain ESF-5).